The sequence spans 873 residues: Bifunctional levopimaradiene synthase, chloroplastic (873 aa).

The transit peptide at 1–59 (MAGVLFANLPCSLQLSPKVPFRQSTNILIPFHKRSSFGFNAQHCVRSHLRLRWNCVGIH) directs the protein to the chloroplast. Lys271 lines the substrate pocket. Positions 405 and 407 each coordinate Mg(2+). Positions 405–408 (DVDD) match the DXDD motif motif. Lys492 lines the substrate pocket. Residues Asp624, Asp628, Asn769, Thr773, and Glu777 each contribute to the Mg(2+) site. Residues 624-628 (DDLYD) carry the DDXXD motif motif.

Belongs to the terpene synthase family. Tpsd subfamily. Requires Mg(2+) as cofactor. As to expression, expressed in roots.

The protein localises to the plastid. It localises to the chloroplast. It carries out the reaction (2E,6E,10E)-geranylgeranyl diphosphate = (+)-copalyl diphosphate. The catalysed reaction is (+)-copalyl diphosphate = abieta-8(14),12-diene + diphosphate. Its pathway is terpene metabolism; ginkgolide biosynthesis. Catalyzes the initial cyclization step in the biosynthesis of ginkgolides, a structurally unique family of diterpenoids that are highly specific platelet-activating-factor receptor antagonists. Bifunctional enzyme that catalyzes two sequential cyclizations of geranylgeranyl diphosphate (GGPP) to levopimaradiene. In Ginkgo biloba (Ginkgo), this protein is Bifunctional levopimaradiene synthase, chloroplastic (LPS).